The primary structure comprises 396 residues: Ornithine aminotransferase (396 aa).

At K255 the chain carries N6-(pyridoxal phosphate)lysine.

It belongs to the class-III pyridoxal-phosphate-dependent aminotransferase family. OAT subfamily. Pyridoxal 5'-phosphate serves as cofactor.

It is found in the cytoplasm. The enzyme catalyses a 2-oxocarboxylate + L-ornithine = L-glutamate 5-semialdehyde + an L-alpha-amino acid. It participates in amino-acid biosynthesis; L-proline biosynthesis; L-glutamate 5-semialdehyde from L-ornithine: step 1/1. Functionally, catalyzes the interconversion of ornithine to glutamate semialdehyde. This chain is Ornithine aminotransferase, found in Staphylococcus epidermidis (strain ATCC 12228 / FDA PCI 1200).